We begin with the raw amino-acid sequence, 490 residues long: Cruciferin BnC1 (490 aa).

Residues 1-23 form the signal peptide; sequence MARLSSLLSFSLALLIFLHGSTA. Cystine bridges form between Cys-30/Cys-63 and Cys-106/Cys-307. 2 Cupin type-1 domains span residues 35–263 and 313–462; these read LNAL…RTAQ and DNLD…EEAR. Residue Thr-109 is modified to Phosphothreonine. The tract at residues 113–164 is disordered; that stretch reads SSVFQPSGGSPSGEGQGQGQQGQGQGHQGQGQGQQGQQGQQGQQSQGQGFRD. Gly residues predominate over residues 122 to 148; sequence SPSGEGQGQGQQGQGQGHQGQGQGQQG. The segment covering 149–161 has biased composition (low complexity); the sequence is QQGQQGQQSQGQG. A Phosphotyrosine modification is found at Tyr-330. Residue Ser-332 is modified to Phosphoserine. Position 426 is a phosphothreonine (Thr-426).

Belongs to the 11S seed storage protein (globulins) family. In terms of assembly, hexamer; each subunit is composed of an acidic and a basic chain derived from a single precursor and linked by a disulfide bond.

In terms of biological role, this is a seed storage protein. This is Cruciferin BnC1 (BnC1) from Brassica napus (Rape).